The primary structure comprises 208 residues: Guanylate kinase (208 aa).

The Guanylate kinase-like domain occupies 5 to 184 (GLLIVFSGPS…AAERVKCVIE (180 aa)). Residue 12–19 (GPSGVGKG) coordinates ATP.

The protein belongs to the guanylate kinase family.

It is found in the cytoplasm. The enzyme catalyses GMP + ATP = GDP + ADP. Its function is as follows. Essential for recycling GMP and indirectly, cGMP. This Streptococcus pneumoniae (strain ATCC BAA-255 / R6) protein is Guanylate kinase.